The primary structure comprises 160 residues: Endoribonuclease YbeY (160 aa).

Zn(2+) contacts are provided by H123, H127, and H133.

This sequence belongs to the endoribonuclease YbeY family. Zn(2+) serves as cofactor.

It is found in the cytoplasm. In terms of biological role, single strand-specific metallo-endoribonuclease involved in late-stage 70S ribosome quality control and in maturation of the 3' terminus of the 16S rRNA. This is Endoribonuclease YbeY from Roseiflexus sp. (strain RS-1).